The primary structure comprises 144 residues: Androgenic gland hormone (144 aa).

The signal sequence occupies residues 1-21; that stretch reads MKGLVILVSLMCLALYNRICA. 4 disulfide bridges follow: Cys33/Cys123, Cys42/Cys59, Cys44/Cys141, and Cys124/Cys132. The propeptide at 68–113 is c peptide; it reads SAPEDELAFEDYEDQDYFHPRALSIPSEIEHDNEKESDAFSILSRG. The N-linked (GlcNAc...) (complex) asparagine glycan is linked to Asn133.

In terms of tissue distribution, androgenic gland.

It is found in the secreted. Functionally, controls sex differentiation and the formation of male appendages, spermatogenesis, pigmentation, and male specific behavior. The sequence is that of Androgenic gland hormone from Armadillidium vulgare (Pillbug).